The sequence spans 146 residues: UPF0260 protein Sbal_1871 (146 aa).

This sequence belongs to the UPF0260 family.

In Shewanella baltica (strain OS155 / ATCC BAA-1091), this protein is UPF0260 protein Sbal_1871.